A 147-amino-acid polypeptide reads, in one-letter code: Nucleoside diphosphate kinase (147 aa).

6 residues coordinate ATP: Lys9, Phe57, Arg85, Thr91, Arg102, and Asn112. The Pros-phosphohistidine intermediate role is filled by His115.

The protein belongs to the NDK family. As to quaternary structure, homotetramer. Requires Mg(2+) as cofactor.

It is found in the cytoplasm. The catalysed reaction is a 2'-deoxyribonucleoside 5'-diphosphate + ATP = a 2'-deoxyribonucleoside 5'-triphosphate + ADP. It carries out the reaction a ribonucleoside 5'-diphosphate + ATP = a ribonucleoside 5'-triphosphate + ADP. Major role in the synthesis of nucleoside triphosphates other than ATP. The ATP gamma phosphate is transferred to the NDP beta phosphate via a ping-pong mechanism, using a phosphorylated active-site intermediate. The chain is Nucleoside diphosphate kinase from Listeria monocytogenes serotype 4b (strain CLIP80459).